Reading from the N-terminus, the 475-residue chain is Glutamate--tRNA ligase 1 (475 aa).

Residues 11–21 (PSPTGYLHIGG) carry the 'HIGH' region motif. The 'KMSKS' region signature appears at 240–244 (KLSKR). Lys243 serves as a coordination point for ATP.

It belongs to the class-I aminoacyl-tRNA synthetase family. Glutamate--tRNA ligase type 1 subfamily. As to quaternary structure, monomer.

The protein resides in the cytoplasm. It carries out the reaction tRNA(Glu) + L-glutamate + ATP = L-glutamyl-tRNA(Glu) + AMP + diphosphate. Functionally, catalyzes the attachment of glutamate to tRNA(Glu) in a two-step reaction: glutamate is first activated by ATP to form Glu-AMP and then transferred to the acceptor end of tRNA(Glu). This chain is Glutamate--tRNA ligase 1, found in Methylobacterium radiotolerans (strain ATCC 27329 / DSM 1819 / JCM 2831 / NBRC 15690 / NCIMB 10815 / 0-1).